A 258-amino-acid polypeptide reads, in one-letter code: uncharacterized protein (258 aa).

6 helical membrane passes run 24-44, 70-90, 100-120, 130-150, 157-177, and 181-201; these read IPLF…VNIF, PLVH…FLLM, LCTI…AYLI, VYVG…LNLF, LLNL…VLGL, and FSIT…FSFA. His188 is an active-site residue.

This sequence belongs to the peptidase S54 family.

It is found in the golgi apparatus membrane. This is an uncharacterized protein from Schizosaccharomyces pombe (strain 972 / ATCC 24843) (Fission yeast).